The sequence spans 425 residues: Serine hydroxymethyltransferase (425 aa).

Residues leucine 128 and 132–134 (GHL) contribute to the (6S)-5,6,7,8-tetrahydrofolate site. Residue lysine 237 is modified to N6-(pyridoxal phosphate)lysine.

This sequence belongs to the SHMT family. Homodimer. Pyridoxal 5'-phosphate serves as cofactor.

It localises to the cytoplasm. The catalysed reaction is (6R)-5,10-methylene-5,6,7,8-tetrahydrofolate + glycine + H2O = (6S)-5,6,7,8-tetrahydrofolate + L-serine. It participates in one-carbon metabolism; tetrahydrofolate interconversion. Its pathway is amino-acid biosynthesis; glycine biosynthesis; glycine from L-serine: step 1/1. Functionally, catalyzes the reversible interconversion of serine and glycine with tetrahydrofolate (THF) serving as the one-carbon carrier. This reaction serves as the major source of one-carbon groups required for the biosynthesis of purines, thymidylate, methionine, and other important biomolecules. Also exhibits THF-independent aldolase activity toward beta-hydroxyamino acids, producing glycine and aldehydes, via a retro-aldol mechanism. This chain is Serine hydroxymethyltransferase, found in Wolbachia pipientis subsp. Culex pipiens (strain wPip).